The primary structure comprises 154 residues: Large ribosomal subunit protein bL9c (154 aa).

Belongs to the bacterial ribosomal protein bL9 family.

It is found in the plastid. The protein resides in the chloroplast. In terms of biological role, binds to the 23S rRNA. The sequence is that of Large ribosomal subunit protein bL9c from Gracilaria tenuistipitata var. liui (Red alga).